The chain runs to 877 residues: Alanine--tRNA ligase (877 aa).

Positions 565, 569, 667, and 671 each coordinate Zn(2+).

The protein belongs to the class-II aminoacyl-tRNA synthetase family. The cofactor is Zn(2+).

It localises to the cytoplasm. The catalysed reaction is tRNA(Ala) + L-alanine + ATP = L-alanyl-tRNA(Ala) + AMP + diphosphate. Its function is as follows. Catalyzes the attachment of alanine to tRNA(Ala) in a two-step reaction: alanine is first activated by ATP to form Ala-AMP and then transferred to the acceptor end of tRNA(Ala). Also edits incorrectly charged Ser-tRNA(Ala) and Gly-tRNA(Ala) via its editing domain. The polypeptide is Alanine--tRNA ligase (Acidithiobacillus ferridurans).